The chain runs to 391 residues: Putative penicillin-binding protein PbpX (391 aa).

A helical membrane pass occupies residues 21 to 40 (GKLLFGLLAVMVCITIWNAL). Residues 44-76 (SEENEPSQETAAVSNTDQKKEVKKKTAKKSEEQ) form a disordered region. Positions 50-59 (SQETAAVSNT) are enriched in polar residues.

The protein belongs to the beta-lactamase family.

The protein resides in the cell membrane. The chain is Putative penicillin-binding protein PbpX (pbpX) from Bacillus subtilis (strain 168).